We begin with the raw amino-acid sequence, 993 residues long: Serine/threonine-protein phosphatase 6 regulatory ankyrin repeat subunit B (993 aa).

ANK repeat units follow at residues 7–36, 40–69, 73–102, 106–135, 139–168, 172–201, 205–234, 238–267, 271–301, 305–334, 338–367, 371–400, 404–433, 437–466, 470–498, 531–561, 566–595, 599–628, 633–662, 669–698, 702–731, 735–764, 771–800, 803–832, 838–867, 871–901, 905–934, and 941–970; these read CEQP…DVNA, EKRT…RVNA, MWLT…DVNA, NWQT…SVNV, GGRT…NINA, KDRR…EVTC, KGYT…EIDE, YGNT…NVNQ, SGFT…DVNI, DGKS…EIDC, DGNT…DTAK, HSMF…EIDT, FGRT…DFHK, CGRT…NVNE, WGRT…DNSE, EGYN…GFEE, ALKS…DLDI, KGRT…SIFV, TKRT…NPEV, KGQT…NVDA, VGCT…SILC, RGRT…SEED, QGYT…FRKF, NPFT…PSIV, KGRT…QVNA, SGKT…DLTV, DLNT…DESL, and ALQT…CVLA. The interval 974 to 993 is disordered; that stretch reads NASRSNGPRSPPGTAVRKEE.

In terms of assembly, protein phosphatase 6 (PP6) holoenzyme is proposed to be a heterotrimeric complex formed by the catalytic subunit, a SAPS domain-containing subunit (PP6R) and an ankyrin repeat-domain containing regulatory subunit (ARS). Interacts with PPP6R1.

Functionally, putative regulatory subunit of protein phosphatase 6 (PP6) that may be involved in the recognition of phosphoprotein substrates. In Mus musculus (Mouse), this protein is Serine/threonine-protein phosphatase 6 regulatory ankyrin repeat subunit B (Ankrd44).